The primary structure comprises 227 residues: uncharacterized protein (227 aa).

The first 23 residues, 1 to 23 (MKKRFSLIMMTGLLFGLTSPAFA), serve as a signal peptide directing secretion. The VWFA domain occupies 36–227 (NVAVLLDASG…FTQQSLMLSK (192 aa)).

To B.subtilis YwmD.

This is an uncharacterized protein from Bacillus subtilis (strain 168).